Reading from the N-terminus, the 403-residue chain is Na(+)-translocating NADH-quinone reductase subunit B (403 aa).

The next 9 helical transmembrane spans lie at 56–76 (MMIT…WNTG), 121–141 (AYFL…EVLF), 163–183 (ILPP…GVVI), 220–240 (WTAV…AGGI), 258–278 (IHGS…AVLI), 287–307 (IVTG…LIGS), 312–332 (LFGM…GMIF), 348–368 (WVFG…NPAF), and 371–391 (GMML…HFVI). At T230 the chain carries FMN phosphoryl threonine.

The protein belongs to the NqrB/RnfD family. In terms of assembly, composed of six subunits; NqrA, NqrB, NqrC, NqrD, NqrE and NqrF. FMN is required as a cofactor.

The protein localises to the cell inner membrane. It catalyses the reaction a ubiquinone + n Na(+)(in) + NADH + H(+) = a ubiquinol + n Na(+)(out) + NAD(+). Its function is as follows. NQR complex catalyzes the reduction of ubiquinone-1 to ubiquinol by two successive reactions, coupled with the transport of Na(+) ions from the cytoplasm to the periplasm. NqrA to NqrE are probably involved in the second step, the conversion of ubisemiquinone to ubiquinol. The sequence is that of Na(+)-translocating NADH-quinone reductase subunit B from Stutzerimonas stutzeri (strain A1501) (Pseudomonas stutzeri).